The following is a 271-amino-acid chain: Aspartate/glutamate leucyltransferase (271 aa).

It belongs to the R-transferase family. Bpt subfamily.

Its subcellular location is the cytoplasm. The catalysed reaction is N-terminal L-glutamyl-[protein] + L-leucyl-tRNA(Leu) = N-terminal L-leucyl-L-glutamyl-[protein] + tRNA(Leu) + H(+). The enzyme catalyses N-terminal L-aspartyl-[protein] + L-leucyl-tRNA(Leu) = N-terminal L-leucyl-L-aspartyl-[protein] + tRNA(Leu) + H(+). In terms of biological role, functions in the N-end rule pathway of protein degradation where it conjugates Leu from its aminoacyl-tRNA to the N-termini of proteins containing an N-terminal aspartate or glutamate. The polypeptide is Aspartate/glutamate leucyltransferase (Acinetobacter baumannii (strain SDF)).